Consider the following 161-residue polypeptide: Tropomyosin-2 (161 aa).

Residues 1–161 adopt a coiled-coil conformation; sequence MEKIKEKLNS…DEIANSLENL (161 aa). A compositionally biased stretch (basic and acidic residues) spans 32–43; sequence LEQSNTEKENEI. Positions 32–97 are disordered; sequence LEQSNTEKEN…NQDLEQQLED (66 aa). Ser55 is modified (phosphoserine). Over residues 62-83 the composition is skewed to polar residues; it reads SQLSDTKQLAEDSNNLRSNNEN. Residues Ser116 and Ser157 each carry the phosphoserine modification.

In terms of assembly, homodimer.

It is found in the cytoplasm. It localises to the cytoskeleton. Involved in cell morphogenesis. Binds to F-actin and stabilizes the actin filaments. The sequence is that of Tropomyosin-2 (TPM2) from Saccharomyces cerevisiae (strain ATCC 204508 / S288c) (Baker's yeast).